Consider the following 846-residue polypeptide: Leucine--tRNA ligase (846 aa).

Positions 47-57 match the 'HIGH' region motif; sequence PYPSGRIHMGH. The 'KMSKS' region motif lies at 621-625; that stretch reads KMSKS. Lys624 provides a ligand contact to ATP.

It belongs to the class-I aminoacyl-tRNA synthetase family.

It is found in the cytoplasm. The enzyme catalyses tRNA(Leu) + L-leucine + ATP = L-leucyl-tRNA(Leu) + AMP + diphosphate. This is Leucine--tRNA ligase from Zymomonas mobilis subsp. mobilis (strain ATCC 31821 / ZM4 / CP4).